A 362-amino-acid polypeptide reads, in one-letter code: Snurportin-1 (362 aa).

Met1 is subject to N-acetylmethionine. 2 disordered regions span residues 1–40 (MEELSQALAGSFSVSQDLNSTAAPHPRLSQYKSKYSSLEQ) and 69–90 (DWTGMESEEEEEKKDDEEMDVD). Residues 1-65 (MEELSQALAG…LDYVNHARRL (65 aa)) form a necessary for interaction with KPNB1 and m3G-cap U1 and U5 snRNP import receptor activity region. The interval 1–160 (MEELSQALAG…NTFPSLLPGG (160 aa)) is necessary for interaction with XPO1. The IBB domain occupies 11–73 (SFSVSQDLNS…RLAEDDWTGM (63 aa)). The span at 12–22 (FSVSQDLNSTA) shows a compositional bias: polar residues. Residues 69–89 (DWTGMESEEEEEKKDDEEMDV) are compositionally biased toward acidic residues. Ser75 is subject to Phosphoserine. The tract at residues 128 to 130 (GKR) is interaction with m3G-cap structure. Positions 210-330 (LHSKLPEEEG…GIMGKLTPRA (121 aa)) are necessary for binding to the m3G-cap structure. The tract at residues 319–362 (KEGIMGKLTPRASENGHYELEHLSTPKLKSPPQRPNHPESLMEN) is disordered. Positions 332 to 342 (ENGHYELEHLS) are enriched in basic and acidic residues.

Belongs to the snurportin family. As to quaternary structure, component of an import snRNP complex composed of KPNB1, SNUPN, SMN1 and ZNF259. Component of a nuclear export receptor complex composed of KPNB1, Ran, SNUPN and XPO1. Found in a trimeric export complex with SNUPN, Ran and XPO1. Interacts (via IBB domain) with KPNB1; the interaction is direct. Interacts with DDX20, IPO7, SMN1, SNRPB and XPO1. Interacts directly with XPO1. Its interaction with XPO1 and binding to m3G-cap U snRNPs appears to be mutually exclusive. Can form homomers.

The protein resides in the nucleus. The protein localises to the cytoplasm. In terms of biological role, functions as an U snRNP-specific nuclear import adapter. Involved in the trimethylguanosine (m3G)-cap-dependent nuclear import of U snRNPs. Binds specifically to the terminal m3G-cap U snRNAs. This is Snurportin-1 (SNUPN) from Bos taurus (Bovine).